We begin with the raw amino-acid sequence, 500 residues long: Na(+)/H(+) antiporter NhaB (500 aa).

The next 12 helical transmembrane spans lie at 28–50, 58–78, 96–116, 129–149, 150–170, 205–225, 241–261, 311–331, 350–370, 394–414, 449–469, and 477–497; these read FLML…LLVI, MALK…ALLL, VILL…LLLF, ALLA…LDAL, TVTA…HRVA, LLMH…VGEP, FFLK…VTCL, ILIA…LMVI, FKDA…VAVI, MLFI…VATI, VATP…IAPL, and MVWM…YAVS.

This sequence belongs to the NhaB Na(+)/H(+) (TC 2.A.34) antiporter family.

Its subcellular location is the cell inner membrane. The enzyme catalyses 2 Na(+)(in) + 3 H(+)(out) = 2 Na(+)(out) + 3 H(+)(in). Its function is as follows. Na(+)/H(+) antiporter that extrudes sodium in exchange for external protons. This Pseudomonas fluorescens (strain Pf0-1) protein is Na(+)/H(+) antiporter NhaB.